The chain runs to 127 residues: DCPPDWSSYEGSCYRVFEQKMNWEDAEKFCTQQQTGGHLVSFQSSEEADFVVSLTSPILRDSFVWTGLSDVWKGCRFEWSDGSDLSYKDNYQFVFSEYECVASKTKNNKWRIIPCTKLEYFVCEFQA.

3 disulfides stabilise this stretch: C2-C13, C30-C123, and C100-C115. In terms of domain architecture, C-type lectin spans 9–124 (YEGSCYRVFE…CTKLEYFVCE (116 aa)).

It belongs to the snaclec family. In terms of assembly, heterodimer of subunits alpha and beta; disulfide-linked. In terms of tissue distribution, expressed by the venom gland.

It localises to the secreted. Its function is as follows. Thrombin and prothrombin (F2) inhibitor. The IC(50) of thrombin-induced platelet aggregation and fibrinocoagulation is 62 and 35 nM, respectively. Its inhibitory activity is at least 10-fold lower than that observed for other thrombin inhibitors. The chain is Snaclec bothroinsularin subunit beta from Bothrops insularis (Golden lancehead).